Here is a 102-residue protein sequence, read N- to C-terminus: MAKQKIRIKLKGFDHKILDQSALQIVEALERTGATISGPVPLPTRIQRYSVIRASFIDKDSQEQFEIRTHKRLIDIVETTSKTIDALTNLNLPAGVSIDIKL.

It belongs to the universal ribosomal protein uS10 family. As to quaternary structure, part of the 30S ribosomal subunit.

Functionally, involved in the binding of tRNA to the ribosomes. This chain is Small ribosomal subunit protein uS10, found in Dehalococcoides mccartyi (strain ATCC BAA-2100 / JCM 16839 / KCTC 5957 / BAV1).